Here is a 156-residue protein sequence, read N- to C-terminus: Cyanate hydratase (156 aa).

Active-site residues include R96, E99, and S122.

It belongs to the cyanase family.

It carries out the reaction cyanate + hydrogencarbonate + 3 H(+) = NH4(+) + 2 CO2. Catalyzes the reaction of cyanate with bicarbonate to produce ammonia and carbon dioxide. The protein is Cyanate hydratase of Pseudomonas putida (strain W619).